The sequence spans 234 residues: Large ribosomal subunit protein uL1 (234 aa).

Belongs to the universal ribosomal protein uL1 family. In terms of assembly, part of the 50S ribosomal subunit.

Functionally, binds directly to 23S rRNA. The L1 stalk is quite mobile in the ribosome, and is involved in E site tRNA release. Protein L1 is also a translational repressor protein, it controls the translation of the L11 operon by binding to its mRNA. The polypeptide is Large ribosomal subunit protein uL1 (Helicobacter pylori (strain Shi470)).